The chain runs to 618 residues: Proline--tRNA ligase (618 aa).

The protein belongs to the class-II aminoacyl-tRNA synthetase family. ProS type 1 subfamily. Homodimer.

Its subcellular location is the cytoplasm. The enzyme catalyses tRNA(Pro) + L-proline + ATP = L-prolyl-tRNA(Pro) + AMP + diphosphate. Catalyzes the attachment of proline to tRNA(Pro) in a two-step reaction: proline is first activated by ATP to form Pro-AMP and then transferred to the acceptor end of tRNA(Pro). As ProRS can inadvertently accommodate and process non-cognate amino acids such as alanine and cysteine, to avoid such errors it has two additional distinct editing activities against alanine. One activity is designated as 'pretransfer' editing and involves the tRNA(Pro)-independent hydrolysis of activated Ala-AMP. The other activity is designated 'posttransfer' editing and involves deacylation of mischarged Ala-tRNA(Pro). The misacylated Cys-tRNA(Pro) is not edited by ProRS. This chain is Proline--tRNA ligase, found in Streptococcus equi subsp. zooepidemicus (strain H70).